The sequence spans 246 residues: Putative carboxymethylenebutenolidase (246 aa).

Active-site residues include Cys127, Asp183, and His215.

The protein belongs to the dienelactone hydrolase family.

It catalyses the reaction 2-(5-oxo-2,5-dihydrofuran-2-ylidene)acetate + H2O = 4-oxohex-2-enedioate + H(+). This is Putative carboxymethylenebutenolidase from Synechocystis sp. (strain ATCC 27184 / PCC 6803 / Kazusa).